Here is a 118-residue protein sequence, read N- to C-terminus: Large ribosomal subunit protein uL18 (118 aa).

The segment at 1-24 is disordered; the sequence is MISKPDKNKTRQRRHARVRGKISG. The span at 10–20 shows a compositional bias: basic residues; the sequence is TRQRRHARVRG.

Belongs to the universal ribosomal protein uL18 family. Part of the 50S ribosomal subunit; part of the 5S rRNA/L5/L18/L25 subcomplex. Contacts the 5S and 23S rRNAs.

This is one of the proteins that bind and probably mediate the attachment of the 5S RNA into the large ribosomal subunit, where it forms part of the central protuberance. This chain is Large ribosomal subunit protein uL18, found in Lactiplantibacillus plantarum (strain ATCC BAA-793 / NCIMB 8826 / WCFS1) (Lactobacillus plantarum).